Reading from the N-terminus, the 61-residue chain is UPF0181 protein Ent638_2380 (61 aa).

Belongs to the UPF0181 family.

The polypeptide is UPF0181 protein Ent638_2380 (Enterobacter sp. (strain 638)).